The sequence spans 372 residues: Tyrosine--tRNA ligase (372 aa).

L-tyrosine-binding residues include Tyr-37, Tyr-169, Gln-173, Asp-176, and Gln-191. The 'KMSKS' region motif lies at 246–250 (KMSKS). Lys-249 is a binding site for ATP.

Belongs to the class-I aminoacyl-tRNA synthetase family. TyrS type 4 subfamily. In terms of assembly, homodimer.

The protein resides in the cytoplasm. The catalysed reaction is tRNA(Tyr) + L-tyrosine + ATP = L-tyrosyl-tRNA(Tyr) + AMP + diphosphate + H(+). Functionally, catalyzes the attachment of tyrosine to tRNA(Tyr) in a two-step reaction: tyrosine is first activated by ATP to form Tyr-AMP and then transferred to the acceptor end of tRNA(Tyr). The sequence is that of Tyrosine--tRNA ligase from Pyrobaculum calidifontis (strain DSM 21063 / JCM 11548 / VA1).